The following is a 431-amino-acid chain: Adenylosuccinate synthetase (431 aa).

GTP contacts are provided by residues 12–18 (GDEGKGK) and 40–42 (GHT). D13 functions as the Proton acceptor in the catalytic mechanism. Mg(2+) contacts are provided by D13 and G40. IMP is bound by residues 13-16 (DEGK), 38-41 (NAGH), T130, R144, Q224, T239, and R303. H41 (proton donor) is an active-site residue. 299-305 (STTGRPR) serves as a coordination point for substrate. GTP is bound by residues R305, 331–333 (KAD), and 413–415 (SIG).

The protein belongs to the adenylosuccinate synthetase family. As to quaternary structure, homodimer. Requires Mg(2+) as cofactor.

It is found in the cytoplasm. It catalyses the reaction IMP + L-aspartate + GTP = N(6)-(1,2-dicarboxyethyl)-AMP + GDP + phosphate + 2 H(+). Its pathway is purine metabolism; AMP biosynthesis via de novo pathway; AMP from IMP: step 1/2. Functionally, plays an important role in the de novo pathway of purine nucleotide biosynthesis. Catalyzes the first committed step in the biosynthesis of AMP from IMP. This Cytophaga hutchinsonii (strain ATCC 33406 / DSM 1761 / CIP 103989 / NBRC 15051 / NCIMB 9469 / D465) protein is Adenylosuccinate synthetase.